Consider the following 405-residue polypeptide: Protein NDRG4 (405 aa).

Positions 352–405 are disordered; the sequence is AGAVPSASMTRLARSRTASLTSASSVDGARPRPCTQSESSDGIGQINHTMEVSC. Residues 361–376 show a composition bias toward low complexity; that stretch reads TRLARSRTASLTSASS. Positions 385–405 are enriched in polar residues; the sequence is CTQSESSDGIGQINHTMEVSC.

Belongs to the NDRG family.

It is found in the cytoplasm. It localises to the cytosol. Functionally, contributes to the maintenance of intracerebral BDNF levels within the normal range. May enhance growth factor-induced ERK1 and ERK2 phosphorylation. May attenuate growth factor-promoted ELK1 phosphorylation in a microtubule-dependent manner. The polypeptide is Protein NDRG4 (Xenopus tropicalis (Western clawed frog)).